Reading from the N-terminus, the 224-residue chain is Putative O-methyltransferase MLBr01075 (224 aa).

S-adenosyl-L-methionine contacts are provided by residues Val51, Glu73, 75–76 (GT), Ser81, Asp99, and Ile100. Asp147 lines the substrate pocket. Asp149 is a binding site for S-adenosyl-L-methionine.

It belongs to the class I-like SAM-binding methyltransferase superfamily. Cation-dependent O-methyltransferase family.

This chain is Putative O-methyltransferase MLBr01075, found in Mycobacterium leprae (strain Br4923).